The following is a 149-amino-acid chain: UPF0178 protein Pmen_0294 (149 aa).

Belongs to the UPF0178 family.

This chain is UPF0178 protein Pmen_0294, found in Ectopseudomonas mendocina (strain ymp) (Pseudomonas mendocina).